The following is a 553-amino-acid chain: Probable inactive serine/threonine-protein kinase samkD (553 aa).

Residues tryptophan 24–tyrosine 90 form the SAM domain. The Protein kinase domain maps to tyrosine 134–phenylalanine 393. Residues isoleucine 140–isoleucine 148 and lysine 165 contribute to the ATP site.

Belongs to the protein kinase superfamily. Ser/Thr protein kinase family.

The protein is Probable inactive serine/threonine-protein kinase samkD (samkD) of Dictyostelium discoideum (Social amoeba).